The sequence spans 1181 residues: DNA-directed RNA polymerase subunit beta' (1181 aa).

Zn(2+) is bound by residues C68, C70, C83, and C86. Mg(2+)-binding residues include D457, D459, and D461. Residues C802, C876, C883, and C886 each contribute to the Zn(2+) site.

The protein belongs to the RNA polymerase beta' chain family. The RNAP catalytic core consists of 2 alpha, 1 beta, 1 beta' and 1 omega subunit. When a sigma factor is associated with the core the holoenzyme is formed, which can initiate transcription. The cofactor is Mg(2+). Zn(2+) serves as cofactor.

It carries out the reaction RNA(n) + a ribonucleoside 5'-triphosphate = RNA(n+1) + diphosphate. DNA-dependent RNA polymerase catalyzes the transcription of DNA into RNA using the four ribonucleoside triphosphates as substrates. The protein is DNA-directed RNA polymerase subunit beta' of Syntrophomonas wolfei subsp. wolfei (strain DSM 2245B / Goettingen).